The sequence spans 315 residues: Olfactory receptor 10H5 (315 aa).

Over 1–25 (MQGLNHTSVSEFILVGFSAFPHLQL) the chain is Extracellular. The N-linked (GlcNAc...) asparagine glycan is linked to asparagine 5. A helical transmembrane segment spans residues 26–46 (MLFLLFLLMYLFTLLGNLLIM). Topologically, residues 47–54 (ATVWSERS) are cytoplasmic. A helical transmembrane segment spans residues 55–75 (LHMPMYLFLCALSITEILYTV). Topologically, residues 76–99 (AIIPRMLADLLSTQRSIAFLACAS) are extracellular. Residues cysteine 97 and cysteine 189 are joined by a disulfide bond. The chain crosses the membrane as a helical span at residues 100 to 120 (QMFFSFSFGFTHSFLLTVMGY). Residues 121-139 (DRYVAICHPLRYNVLMSLR) lie on the Cytoplasmic side of the membrane. Residues 140–160 (GCTCRVGCSWAGGLVMGMVVT) traverse the membrane as a helical segment. The Extracellular segment spans residues 161–197 (SAIFHLAFCGHKEIHHFFCHVPPLLKLACGDDVLVVA). Residues 198–218 (KGVGLVCITALLGCFLLILLS) traverse the membrane as a helical segment. The Cytoplasmic segment spans residues 219–238 (YAFIVAAILKIPSAEGRNKA). Residues 239 to 259 (FSTCASHLTVVVVHYGFASVI) form a helical membrane-spanning segment. At 260 to 272 (YLKPKGPQSPEGD) the chain is on the extracellular side. Residues 273 to 293 (TLMGITYTVLTPFLSPIIFSL) traverse the membrane as a helical segment. Residues 294 to 315 (RNKELKVAMKKTCFTKLFPQNC) are Cytoplasmic-facing.

The protein belongs to the G-protein coupled receptor 1 family.

The protein localises to the cell membrane. Functionally, odorant receptor. The sequence is that of Olfactory receptor 10H5 (OR10H5) from Homo sapiens (Human).